A 497-amino-acid polypeptide reads, in one-letter code: MELVVKSVAAASVKTATLVVPVGEGRKLGAVAKAVDLATDGAISAVLKRGDLAGKPGQTLLLQNLPGLKAERVLLVGSGKDEALGDRAWRKLVASVAGVLKGLNGSDAVLALDDIAVSNRDAHYGKYRLLAETLLDGEYVFDRFKSQKAEPRALKKITLLADKAGLTEVERAARHATAIATGMAFTRDLGNLPPNLCHPSYLAEQAKELGKAHKGLKVEVFDEKKIKDLGMGAFYAVGQGSEQPPRLIVLQYQGAKKSDKPFVLVGKGITFDTGGISLKPGAGMDEMKYDMCGAASVFGTLRAVLELKLPINLVCILACAENMPSGNATRPGDIVTTMSGQTVEILNTDAEGRLVLCDALTYAERFKPQAVIDIATLTGACIVALGSHTAGLLGNNDELIGQLLDAGKRADDRAWQLPLFDEYQEQLDSPFADIANIGGPKAGTITAACFLSRFAKAYNWAHLDIAGTAWVSGGKDKGATGRPVPLLTQYLLDRASA.

Mn(2+)-binding residues include Lys-267 and Asp-272. Lys-279 is an active-site residue. Mn(2+) is bound by residues Asp-290, Asp-349, and Glu-351. Arg-353 is an active-site residue.

The protein belongs to the peptidase M17 family. Mn(2+) serves as cofactor.

It localises to the cytoplasm. The enzyme catalyses Release of an N-terminal amino acid, Xaa-|-Yaa-, in which Xaa is preferably Leu, but may be other amino acids including Pro although not Arg or Lys, and Yaa may be Pro. Amino acid amides and methyl esters are also readily hydrolyzed, but rates on arylamides are exceedingly low.. It carries out the reaction Release of an N-terminal amino acid, preferentially leucine, but not glutamic or aspartic acids.. In terms of biological role, presumably involved in the processing and regular turnover of intracellular proteins. Catalyzes the removal of unsubstituted N-terminal amino acids from various peptides. The protein is Probable cytosol aminopeptidase of Pseudomonas putida (strain W619).